The following is a 147-amino-acid chain: Hemoglobin subunit beta (147 aa).

At valine 2 the chain carries N-acetylvaline. A Globin domain is found at 3–147; it reads HLTGEEKSAV…VANALAHKYH (145 aa). The residue at position 13 (threonine 13) is a Phosphothreonine. A Phosphoserine modification is found at serine 45. Lysine 60 carries the post-translational modification N6-acetyllysine. Histidine 64 is a heme b binding site. Lysine 83 carries the post-translational modification N6-acetyllysine. Histidine 93 serves as a coordination point for heme b. Cysteine 94 bears the S-nitrosocysteine mark. At lysine 145 the chain carries N6-acetyllysine.

This sequence belongs to the globin family. Heterotetramer of two alpha chains and two beta chains. Red blood cells.

Functionally, involved in oxygen transport from the lung to the various peripheral tissues. The sequence is that of Hemoglobin subunit beta (HBB) from Callimico goeldii (Goeldi's marmoset).